We begin with the raw amino-acid sequence, 309 residues long: Aspartate carbamoyltransferase catalytic subunit (309 aa).

The carbamoyl phosphate site is built by arginine 55 and threonine 56. Lysine 85 is a binding site for L-aspartate. Carbamoyl phosphate-binding residues include arginine 106, histidine 135, and glutamine 138. Positions 168 and 230 each coordinate L-aspartate. Positions 268 and 269 each coordinate carbamoyl phosphate.

Belongs to the aspartate/ornithine carbamoyltransferase superfamily. ATCase family. In terms of assembly, heterododecamer (2C3:3R2) of six catalytic PyrB chains organized as two trimers (C3), and six regulatory PyrI chains organized as three dimers (R2).

The catalysed reaction is carbamoyl phosphate + L-aspartate = N-carbamoyl-L-aspartate + phosphate + H(+). The protein operates within pyrimidine metabolism; UMP biosynthesis via de novo pathway; (S)-dihydroorotate from bicarbonate: step 2/3. Its function is as follows. Catalyzes the condensation of carbamoyl phosphate and aspartate to form carbamoyl aspartate and inorganic phosphate, the committed step in the de novo pyrimidine nucleotide biosynthesis pathway. This Aliivibrio fischeri (strain MJ11) (Vibrio fischeri) protein is Aspartate carbamoyltransferase catalytic subunit.